The primary structure comprises 259 residues: Merozoite surface protein CMZ-8 (259 aa).

The segment covering 1–108 has biased composition (pro residues); sequence PLPFSPPSTP…STPVSPPSSP (108 aa). 2 disordered regions span residues 1-127 and 174-203; these read PLPF…STSE and RPGS…RHKG. 15 repeat units span residues 5–11, 12–18, 19–25, 26–32, 33–39, 40–46, 47–53, 54–60, 61–67, 68–74, 75–81, 82–88, 89–95, 96–102, and 103–109. Residues 5–109 are 15 X 7 AA repeats of S-P-P-S-T-P-V; the sequence is SPPSTPVSPP…TPVSPPSSPA (105 aa). Basic residues predominate over residues 184–203; the sequence is HCTRSTRSSRRMSRRHRHKG.

The chain is Merozoite surface protein CMZ-8 from Eimeria acervulina (Coccidian parasite).